The primary structure comprises 97 residues: Putative septation protein SpoVG (97 aa).

This sequence belongs to the SpoVG family.

Could be involved in septation. This chain is Putative septation protein SpoVG, found in Anaeromyxobacter sp. (strain Fw109-5).